The sequence spans 132 residues: Small ribosomal subunit protein uS8c (132 aa).

It belongs to the universal ribosomal protein uS8 family. Part of the 30S ribosomal subunit.

The protein localises to the plastid. It localises to the chloroplast. Its function is as follows. One of the primary rRNA binding proteins, it binds directly to 16S rRNA central domain where it helps coordinate assembly of the platform of the 30S subunit. The polypeptide is Small ribosomal subunit protein uS8c (rps8) (Physcomitrium patens (Spreading-leaved earth moss)).